A 309-amino-acid polypeptide reads, in one-letter code: Protein FdhE (309 aa).

Belongs to the FdhE family.

The protein resides in the cytoplasm. In terms of biological role, necessary for formate dehydrogenase activity. The polypeptide is Protein FdhE (Salmonella paratyphi A (strain ATCC 9150 / SARB42)).